Here is a 156-residue protein sequence, read N- to C-terminus: Isotocin-neurophysin IT 2 (156 aa).

The signal sequence occupies residues 1 to 19; sequence MTGAAVSVCLLYALSVCSA. A disulfide bond links Cys20 and Cys25. A Glycine amide modification is found at Gly28. Intrachain disulfides connect Cys41-Cys85, Cys44-Cys58, Cys52-Cys75, Cys59-Cys65, Cys92-Cys105, Cys99-Cys117, and Cys106-Cys111.

The protein belongs to the vasopressin/oxytocin family. Post-translationally, seven disulfide bonds are present in neurophysin.

It localises to the secreted. Functionally, isotocin causes contraction of smooth muscles. In Oncorhynchus keta (Chum salmon), this protein is Isotocin-neurophysin IT 2.